The primary structure comprises 461 residues: ATP synthase subunit beta (461 aa).

151 to 158 is a binding site for ATP; it reads GGAGVGKT.

Belongs to the ATPase alpha/beta chains family. As to quaternary structure, F-type ATPases have 2 components, CF(1) - the catalytic core - and CF(0) - the membrane proton channel. CF(1) has five subunits: alpha(3), beta(3), gamma(1), delta(1), epsilon(1). CF(0) has three main subunits: a(1), b(2) and c(9-12). The alpha and beta chains form an alternating ring which encloses part of the gamma chain. CF(1) is attached to CF(0) by a central stalk formed by the gamma and epsilon chains, while a peripheral stalk is formed by the delta and b chains.

The protein resides in the cell inner membrane. The catalysed reaction is ATP + H2O + 4 H(+)(in) = ADP + phosphate + 5 H(+)(out). In terms of biological role, produces ATP from ADP in the presence of a proton gradient across the membrane. The catalytic sites are hosted primarily by the beta subunits. In Idiomarina loihiensis (strain ATCC BAA-735 / DSM 15497 / L2-TR), this protein is ATP synthase subunit beta.